A 335-amino-acid polypeptide reads, in one-letter code: Glycerol-3-phosphate dehydrogenase [NAD(P)+] (335 aa).

Positions 15, 36, and 109 each coordinate NADPH. Residues Lys109, Gly137, and Ser139 each coordinate sn-glycerol 3-phosphate. Ala141 lines the NADPH pocket. Residues Lys192, Asp245, Ser255, Arg256, and Asn257 each contribute to the sn-glycerol 3-phosphate site. Lys192 acts as the Proton acceptor in catalysis. Residue Arg256 participates in NADPH binding. Leu279 and Glu281 together coordinate NADPH.

Belongs to the NAD-dependent glycerol-3-phosphate dehydrogenase family.

It is found in the cytoplasm. The catalysed reaction is sn-glycerol 3-phosphate + NAD(+) = dihydroxyacetone phosphate + NADH + H(+). It catalyses the reaction sn-glycerol 3-phosphate + NADP(+) = dihydroxyacetone phosphate + NADPH + H(+). It participates in membrane lipid metabolism; glycerophospholipid metabolism. Its function is as follows. Catalyzes the reduction of the glycolytic intermediate dihydroxyacetone phosphate (DHAP) to sn-glycerol 3-phosphate (G3P), the key precursor for phospholipid synthesis. This chain is Glycerol-3-phosphate dehydrogenase [NAD(P)+], found in Beijerinckia indica subsp. indica (strain ATCC 9039 / DSM 1715 / NCIMB 8712).